A 79-amino-acid polypeptide reads, in one-letter code: Small ribosomal subunit protein bS18 (79 aa).

Belongs to the bacterial ribosomal protein bS18 family. As to quaternary structure, part of the 30S ribosomal subunit. Forms a tight heterodimer with protein bS6.

Its function is as follows. Binds as a heterodimer with protein bS6 to the central domain of the 16S rRNA, where it helps stabilize the platform of the 30S subunit. The sequence is that of Small ribosomal subunit protein bS18 from Streptococcus pyogenes serotype M49 (strain NZ131).